Consider the following 196-residue polypeptide: Ras-related protein RabC (196 aa).

13–20 (GESGVGKS) lines the GTP pocket. The short motif at 35–43 (FAPTLGVDF) is the Effector region element. GTP-binding positions include 63–67 (DTAGQ) and 121–124 (NKSD). S-geranylgeranyl cysteine attachment occurs at residues Cys-195 and Cys-196.

Belongs to the small GTPase superfamily. Rab family.

The protein localises to the cell membrane. The protein is Ras-related protein RabC (rabC) of Dictyostelium discoideum (Social amoeba).